The following is a 327-amino-acid chain: S-adenosylmethionine/S-adenosylhomocysteine transporter (327 aa).

Helical transmembrane passes span 22–42, 53–73, 85–105, 114–134, 143–163, 165–185, 202–222, 240–260, 271–291, and 294–314; these read CDMA…SFAL, LFVT…LLLC, IMPI…LEFI, TACF…YVQL, LGGL…GGSE, VAEW…ATCL, SLSM…LSLI, LFLQ…YNLF, FLSF…WLLL, and SFPP…RLIY. Residues 34–157 enclose the EamA 1 domain; that stretch reads FIWSSSFALS…LGLVSYLVYL (124 aa). Residues 189 to 313 enclose the EamA 2 domain; it reads GWTLLRKLGR…GFMVLGCRLI (125 aa).

This sequence belongs to the drug/metabolite transporter (DMT) superfamily. 10 TMS drug/metabolite exporter (DME) (TC 2.A.7.3) family.

The protein resides in the cell membrane. With respect to regulation, CCCP treatment reduces SAM intracellular uptake by 50%. Transports S-adenosylmethionine (SAM) and S-adenosylhomocysteine (SAH). Allows bacteria to acquire SAM from the eukaryotic host cell and to likely remove the toxic by-product SAH. This is S-adenosylmethionine/S-adenosylhomocysteine transporter from Chlamydia trachomatis serovar L2 (strain ATCC VR-902B / DSM 19102 / 434/Bu).